We begin with the raw amino-acid sequence, 211 residues long: tRNA (guanine-N(7)-)-methyltransferase (211 aa).

Residues Glu44, Asp69, Asp96, and Asp118 each contribute to the S-adenosyl-L-methionine site. Residue Asp118 is part of the active site. Lys122 lines the substrate pocket. The segment at 124 to 129 (RHEKRR) is interaction with RNA. Substrate-binding positions include Asp154 and 191 to 194 (TEYE).

This sequence belongs to the class I-like SAM-binding methyltransferase superfamily. TrmB family.

The catalysed reaction is guanosine(46) in tRNA + S-adenosyl-L-methionine = N(7)-methylguanosine(46) in tRNA + S-adenosyl-L-homocysteine. Its pathway is tRNA modification; N(7)-methylguanine-tRNA biosynthesis. Its function is as follows. Catalyzes the formation of N(7)-methylguanine at position 46 (m7G46) in tRNA. The sequence is that of tRNA (guanine-N(7)-)-methyltransferase from Streptococcus pneumoniae (strain JJA).